The sequence spans 37 residues: Large ribosomal subunit protein bL12 (37 aa).

It belongs to the bacterial ribosomal protein bL12 family. Homodimer. Part of the ribosomal stalk of the 50S ribosomal subunit. Forms a multimeric L10(L12)X complex, where L10 forms an elongated spine to which 2 to 4 L12 dimers bind in a sequential fashion. Binds GTP-bound translation factors.

In terms of biological role, forms part of the ribosomal stalk which helps the ribosome interact with GTP-bound translation factors. Is thus essential for accurate translation. The protein is Large ribosomal subunit protein bL12 (rplL) of Clostridium pasteurianum.